The sequence spans 167 residues: Putative universal stress protein SSP1056 (167 aa).

Belongs to the universal stress protein A family.

Its subcellular location is the cytoplasm. The polypeptide is Putative universal stress protein SSP1056 (Staphylococcus saprophyticus subsp. saprophyticus (strain ATCC 15305 / DSM 20229 / NCIMB 8711 / NCTC 7292 / S-41)).